The chain runs to 711 residues: 1,4-alpha-glucan branching enzyme GlgB (711 aa).

Catalysis depends on aspartate 392, which acts as the Nucleophile. Glutamate 443 serves as the catalytic Proton donor.

It belongs to the glycosyl hydrolase 13 family. GlgB subfamily. As to quaternary structure, monomer.

The catalysed reaction is Transfers a segment of a (1-&gt;4)-alpha-D-glucan chain to a primary hydroxy group in a similar glucan chain.. Its pathway is glycan biosynthesis; glycogen biosynthesis. Functionally, catalyzes the formation of the alpha-1,6-glucosidic linkages in glycogen by scission of a 1,4-alpha-linked oligosaccharide from growing alpha-1,4-glucan chains and the subsequent attachment of the oligosaccharide to the alpha-1,6 position. This Corynebacterium jeikeium (strain K411) protein is 1,4-alpha-glucan branching enzyme GlgB.